Here is a 257-residue protein sequence, read N- to C-terminus: Triosephosphate isomerase (257 aa).

Residues Asn11 and Lys13 each contribute to the substrate site. The active-site Electrophile is His96. Glu170 (proton acceptor) is an active-site residue.

It belongs to the triosephosphate isomerase family. As to quaternary structure, homodimer.

The protein resides in the cytoplasm. It carries out the reaction D-glyceraldehyde 3-phosphate = dihydroxyacetone phosphate. It catalyses the reaction dihydroxyacetone phosphate = methylglyoxal + phosphate. It participates in carbohydrate biosynthesis; gluconeogenesis. The protein operates within carbohydrate degradation; glycolysis; D-glyceraldehyde 3-phosphate from glycerone phosphate: step 1/1. Functionally, triosephosphate isomerase is an extremely efficient metabolic enzyme that catalyzes the interconversion between dihydroxyacetone phosphate (DHAP) and D-glyceraldehyde-3-phosphate (G3P) in glycolysis and gluconeogenesis. Its function is as follows. It is also responsible for the non-negligible production of methylglyoxal a reactive cytotoxic side-product that modifies and can alter proteins, DNA and lipids. In Giardia intestinalis (Giardia lamblia), this protein is Triosephosphate isomerase.